The sequence spans 318 residues: Aspartate carbamoyltransferase catalytic subunit (318 aa).

Carbamoyl phosphate contacts are provided by Arg58 and Thr59. Lys86 is an L-aspartate binding site. Carbamoyl phosphate is bound by residues Arg108, His141, and Gln144. L-aspartate-binding residues include Arg174 and Arg226. Carbamoyl phosphate is bound by residues Gly270 and Pro271.

The protein belongs to the aspartate/ornithine carbamoyltransferase superfamily. ATCase family. In terms of assembly, heterododecamer (2C3:3R2) of six catalytic PyrB chains organized as two trimers (C3), and six regulatory PyrI chains organized as three dimers (R2).

It catalyses the reaction carbamoyl phosphate + L-aspartate = N-carbamoyl-L-aspartate + phosphate + H(+). Its pathway is pyrimidine metabolism; UMP biosynthesis via de novo pathway; (S)-dihydroorotate from bicarbonate: step 2/3. In terms of biological role, catalyzes the condensation of carbamoyl phosphate and aspartate to form carbamoyl aspartate and inorganic phosphate, the committed step in the de novo pyrimidine nucleotide biosynthesis pathway. In Lactobacillus delbrueckii subsp. bulgaricus (strain ATCC 11842 / DSM 20081 / BCRC 10696 / JCM 1002 / NBRC 13953 / NCIMB 11778 / NCTC 12712 / WDCM 00102 / Lb 14), this protein is Aspartate carbamoyltransferase catalytic subunit.